We begin with the raw amino-acid sequence, 331 residues long: Germ cell-specific gene 1-like protein (331 aa).

Residues 1–8 lie on the Cytoplasmic side of the membrane; that stretch reads MKTSRRGR. The chain crosses the membrane as a helical span at residues 9-29; the sequence is ALLAVALNLLALLFATTAFLT. Topologically, residues 30–132 are extracellular; it reads THWCQGTQRV…FIDLAPASEK (103 aa). A helical membrane pass occupies residues 133-153; sequence GVLWLSVVSEVLYILLLVVGF. Topologically, residues 154-173 are cytoplasmic; the sequence is SLMCLELFHSSNVIDGLKLN. Residues 174–194 traverse the membrane as a helical segment; that stretch reads AFAAVFTVLSGLLGMVAHMMY. At 195–217 the chain is on the extracellular side; that stretch reads TQVFQVTVSLGPEDWRPHSWDYG. A helical membrane pass occupies residues 218–238; the sequence is WSFCLAWGSFTCCMAASVTTL. Over 239–331 the chain is Cytoplasmic; the sequence is NSYTKTVIEF…RQCWVLGHWV (93 aa).

It belongs to the GSG1 family. In terms of assembly, component of the inner core of AMPAR complex. AMPAR complex consists of an inner core made of 4 pore-forming GluA/GRIA proteins (GRIA1, GRIA2, GRIA3 and GRIA4) and 4 major auxiliary subunits arranged in a twofold symmetry. One of the two pairs of distinct binding sites is occupied either by CNIH2, CNIH3 or CACNG2, CACNG3. The other harbors CACNG2, CACNG3, CACNG4, CACNG8 or GSG1L. This inner core of AMPAR complex is complemented by outer core constituents binding directly to the GluA/GRIA proteins at sites distinct from the interaction sites of the inner core constituents. Outer core constituents include at least PRRT1, PRRT2, CKAMP44/SHISA9, FRRS1L and NRN1. The proteins of the inner and outer core serve as a platform for other, more peripherally associated AMPAR constituents. Alone or in combination, these auxiliary subunits control the gating and pharmacology of the AMPAR complex and profoundly impact their biogenesis and protein processing.

The protein localises to the cell membrane. It is found in the synapse. Functionally, as a component of the inner core of AMPAR complex, modifies AMPA receptor (AMPAR) gating. This Homo sapiens (Human) protein is Germ cell-specific gene 1-like protein (GSG1L).